Here is a 343-residue protein sequence, read N- to C-terminus: Outer envelope pore protein 37, chloroplastic (343 aa).

Polar residues-rich tracts occupy residues 1–11 (MADPSSQNPNL) and 23–43 (THQI…PCST). The disordered stretch occupies residues 1-43 (MADPSSQNPNLATPPPPSSPSPTHQIQSGTSELSPPSRPPCST). The transit peptide at 1 to 73 (MADPSSQNPN…DSLLFLNKVS (73 aa)) directs the protein to the chloroplast. Topologically, residues 74–76 (CKL) are cytoplasmic. The beta stranded transmembrane segment at 77 to 86 (FDNLAKLKLS) threads the bilayer. The Chloroplast intermembrane portion of the chain corresponds to 87–103 (FQNNSQREISQPQVSFT). The beta stranded transmembrane segment at 104-113 (SKHVSVLYDV) threads the bilayer. Topologically, residues 114 to 129 (EEKNTFIKSTLDVHPR) are cytoplasmic. A beta stranded membrane pass occupies residues 130–137 (LQLRALHN). The Chloroplast intermembrane portion of the chain corresponds to 138–154 (VKAQQGEVAMEANLTEP). A beta stranded membrane pass occupies residues 155–164 (GYSLELSSPV). The Cytoplasmic portion of the chain corresponds to 165–169 (PIGYP). A beta stranded transmembrane segment spans residues 170–178 (RATLKFPLG). Topologically, residues 179–219 (EISLQEKDEEEEEKQKRTLSVNGILKRQVMNGVCTALYTDE) are chloroplast intermembrane. Residues 220–228 (ELRLRYAYK) form a beta stranded membrane-spanning segment. Topologically, residues 229 to 230 (DD) are cytoplasmic. Residues 231-240 (ALSFIPSISL) form a beta stranded membrane-spanning segment. Pro-241 is a topological domain (chloroplast intermembrane). Residues 242–250 (SNAASFAFK) traverse the membrane as a beta stranded segment. The Cytoplasmic portion of the chain corresponds to 251 to 257 (RRFSPSD). Residues 258–267 (KLSYWYNFDS) form a beta stranded membrane-spanning segment. Topologically, residues 268–269 (NM) are chloroplast intermembrane. Residues 270–279 (WSAVYKRTYG) form a beta stranded membrane-spanning segment. Residues 280–286 (KDYKLKA) are Cytoplasmic-facing. The beta stranded transmembrane segment at 287–296 (GYDSDVRLGW) threads the bilayer. The Chloroplast intermembrane portion of the chain corresponds to 297-316 (ASLWVGDEAGKVKTTPMKMK). The chain crosses the membrane as a beta stranded span at residues 317-326 (VQFMLQVPQD). The Cytoplasmic segment spans residues 327–343 (DIKSSVLMFRVKKRWDI).

The protein belongs to the plastid outer envelope porin OEP37 (TC 1.B.47) family. Forms an hourglass-shaped multimeric complex. As to expression, ubiquitously expressed at low levels. Mostly present in cotyledons, and accumulates in seedlings and embryos.

It is found in the plastid. Its subcellular location is the chloroplast outer membrane. Its function is as follows. Voltage-dependent peptide-sensitive high conductance rectifying cation channel with a strong affinity for TIC32 that is imported into the chloroplast. Conductance is pH-dependent decreasing with decreasing pH values. This is Outer envelope pore protein 37, chloroplastic (OEP37) from Arabidopsis thaliana (Mouse-ear cress).